We begin with the raw amino-acid sequence, 87 residues long: Large ribosomal subunit protein bL31B (87 aa).

It belongs to the bacterial ribosomal protein bL31 family. Type B subfamily. Part of the 50S ribosomal subunit.

The protein is Large ribosomal subunit protein bL31B of Burkholderia thailandensis (strain ATCC 700388 / DSM 13276 / CCUG 48851 / CIP 106301 / E264).